Consider the following 337-residue polypeptide: ATP-dependent 6-phosphofructokinase (337 aa).

ATP is bound at residue Gly11. 21-25 (RAVVR) is an ADP binding site. Residues 72–73 (RY) and 102–105 (GDGS) contribute to the ATP site. Asp103 is a binding site for Mg(2+). Residue 125–127 (TID) participates in substrate binding. The active-site Proton acceptor is Asp127. ADP is bound at residue Arg154. Residues Arg162 and 169–171 (MGR) contribute to the substrate site. ADP-binding positions include 185-187 (GAD), Arg212, and 214-216 (KNH). Substrate contacts are provided by residues Glu223, Arg245, and 251–254 (HILR).

Belongs to the phosphofructokinase type A (PFKA) family. ATP-dependent PFK group I subfamily. Prokaryotic clade 'B1' sub-subfamily. In terms of assembly, homotetramer. Mg(2+) is required as a cofactor.

The protein localises to the cytoplasm. It carries out the reaction beta-D-fructose 6-phosphate + ATP = beta-D-fructose 1,6-bisphosphate + ADP + H(+). Its pathway is carbohydrate degradation; glycolysis; D-glyceraldehyde 3-phosphate and glycerone phosphate from D-glucose: step 3/4. With respect to regulation, allosterically activated by ADP and other diphosphonucleosides, and allosterically inhibited by phosphoenolpyruvate. Catalyzes the phosphorylation of D-fructose 6-phosphate to fructose 1,6-bisphosphate by ATP, the first committing step of glycolysis. This Streptococcus equi subsp. zooepidemicus (strain H70) protein is ATP-dependent 6-phosphofructokinase.